The following is a 152-amino-acid chain: uncharacterized protein (152 aa).

This is an uncharacterized protein from Escherichia coli (Bacteriophage T4).